Consider the following 359-residue polypeptide: 5-formaminoimidazole-4-carboxamide-1-(beta)-D-ribofuranosyl 5'-monophosphate synthetase (359 aa).

Residues His28 and Ser95 each coordinate 5-amino-1-(5-phospho-beta-D-ribosyl)imidazole-4-carboxamide. In terms of domain architecture, ATP-grasp spans 115-346 (ELMIWETDRD…MGRRIAREIK (232 aa)). Residues 144 to 206 (PEEI…ANIY) and Glu228 each bind ATP. Asn256 provides a ligand contact to 5-amino-1-(5-phospho-beta-D-ribosyl)imidazole-4-carboxamide. Glu295 and Glu308 together coordinate Mg(2+).

Belongs to the phosphohexose mutase family. Mg(2+) serves as cofactor. It depends on Mn(2+) as a cofactor.

It catalyses the reaction 5-amino-1-(5-phospho-beta-D-ribosyl)imidazole-4-carboxamide + formate + ATP = 5-formamido-1-(5-phospho-D-ribosyl)imidazole-4-carboxamide + ADP + phosphate. Its pathway is purine metabolism; IMP biosynthesis via de novo pathway; 5-formamido-1-(5-phospho-D-ribosyl)imidazole-4-carboxamide from 5-amino-1-(5-phospho-D-ribosyl)imidazole-4-carboxamide (formate route): step 1/1. In terms of biological role, catalyzes the ATP- and formate-dependent formylation of 5-aminoimidazole-4-carboxamide-1-beta-d-ribofuranosyl 5'-monophosphate (AICAR) to 5-formaminoimidazole-4-carboxamide-1-beta-d-ribofuranosyl 5'-monophosphate (FAICAR) in the absence of folates. In Archaeoglobus fulgidus (strain ATCC 49558 / DSM 4304 / JCM 9628 / NBRC 100126 / VC-16), this protein is 5-formaminoimidazole-4-carboxamide-1-(beta)-D-ribofuranosyl 5'-monophosphate synthetase.